The following is a 268-amino-acid chain: NH(3)-dependent NAD(+) synthetase (268 aa).

Position 46–53 (46–53 (GVSGGQDS)) interacts with ATP. Residue aspartate 52 coordinates Mg(2+). Arginine 140 provides a ligand contact to deamido-NAD(+). ATP is bound at residue threonine 160. Glutamate 165 contacts Mg(2+). Residues lysine 173 and aspartate 180 each coordinate deamido-NAD(+). Lysine 189 serves as a coordination point for ATP. 260–261 (HK) contacts deamido-NAD(+).

The protein belongs to the NAD synthetase family. In terms of assembly, homodimer.

It catalyses the reaction deamido-NAD(+) + NH4(+) + ATP = AMP + diphosphate + NAD(+) + H(+). It functions in the pathway cofactor biosynthesis; NAD(+) biosynthesis; NAD(+) from deamido-NAD(+) (ammonia route): step 1/1. Catalyzes the ATP-dependent amidation of deamido-NAD to form NAD. Uses ammonia as a nitrogen source. This Buchnera aphidicola subsp. Acyrthosiphon pisum (strain Tuc7) protein is NH(3)-dependent NAD(+) synthetase.